The following is a 343-amino-acid chain: L-threonine 3-dehydrogenase (343 aa).

Cys40 provides a ligand contact to Zn(2+). Catalysis depends on charge relay system residues Thr42 and His45. 6 residues coordinate Zn(2+): His65, Glu66, Cys95, Cys98, Cys101, and Cys109. NAD(+)-binding positions include Ile177, Asp197, Arg202, 264–266, and 288–289; these read LGI and IY.

The protein belongs to the zinc-containing alcohol dehydrogenase family. Homotetramer. It depends on Zn(2+) as a cofactor.

It is found in the cytoplasm. The catalysed reaction is L-threonine + NAD(+) = (2S)-2-amino-3-oxobutanoate + NADH + H(+). It participates in amino-acid degradation; L-threonine degradation via oxydo-reductase pathway; glycine from L-threonine: step 1/2. Catalyzes the NAD(+)-dependent oxidation of L-threonine to 2-amino-3-ketobutyrate. The polypeptide is L-threonine 3-dehydrogenase (Vibrio atlanticus (strain LGP32) (Vibrio splendidus (strain Mel32))).